Consider the following 115-residue polypeptide: Ribonuclease P protein component (115 aa).

Belongs to the RnpA family. Consists of a catalytic RNA component (M1 or rnpB) and a protein subunit.

The enzyme catalyses Endonucleolytic cleavage of RNA, removing 5'-extranucleotides from tRNA precursor.. Functionally, RNaseP catalyzes the removal of the 5'-leader sequence from pre-tRNA to produce the mature 5'-terminus. It can also cleave other RNA substrates such as 4.5S RNA. The protein component plays an auxiliary but essential role in vivo by binding to the 5'-leader sequence and broadening the substrate specificity of the ribozyme. In Staphylococcus epidermidis (strain ATCC 35984 / DSM 28319 / BCRC 17069 / CCUG 31568 / BM 3577 / RP62A), this protein is Ribonuclease P protein component.